A 505-amino-acid polypeptide reads, in one-letter code: Peroxisome proliferator-activated receptor gamma (505 aa).

A glycan (O-linked (GlcNAc) threonine) is linked at Thr84. The residue at position 112 (Ser112) is a Phosphoserine. A DNA-binding region (nuclear receptor) is located at residues 136 to 210; the sequence is AIECRVCGDK…VGMSHNAIRF (75 aa). NR C4-type zinc fingers lie at residues 139 to 159 and 176 to 198; these read CRVC…CEGC and CDLN…FQKC. An interaction with FAM120B region spans residues 205-280; sequence HNAIRFGRMP…DKSPFVIYDM (76 aa). The region spanning 238-503 is the NR LBD domain; it reads DLRALAKHLY…HPLLQEIYKD (266 aa). Lys252 is covalently cross-linked (Glycyl lysine isopeptide (Lys-Gly) (interchain with G-Cter in ubiquitin)). Residues 314–317, His351, His477, and Tyr501 each bind rosiglitazone; that span reads QFRS. Residues 495 to 503 carry the 9aaTAD motif; sequence PLLQEIYKD.

Belongs to the nuclear hormone receptor family. NR1 subfamily. As to quaternary structure, interacts with FOXO1 (acetylated form). Heterodimer with other nuclear receptors, such as RXRA. The heterodimer with the retinoic acid receptor RXRA is called adipocyte-specific transcription factor ARF6. Interacts with NCOA6 coactivator, leading to a strong increase in transcription of target genes. Interacts with coactivator PPARBP, leading to a mild increase in transcription of target genes. Interacts with NOCA7 in a ligand-inducible manner. Interacts with NCOA1 and NCOA2 LXXLL motifs. Interacts with ASXL1, ASXL2, DNTTIP2, FAM120B, MAP2K1/MEK1, NR0B2, PDPK1, PRDM16, PRMT2 and TGFB1I1. Interacts (when activated by agonist) with PPP5C. Interacts with HELZ2 and THRAP3; the interaction stimulates the transcriptional activity of PPARG. Interacts with PER2, the interaction is ligand dependent and blocks PPARG recruitment to target promoters. Interacts with NOCT. Interacts with ACTN4. Interacts (when in the liganded conformation) with GPS2. Interacts with CRY1 and CRY2 in a ligand-dependent manner. In the absence of hormonal ligand, interacts with TACC1. In macrophages, interacts with PAQR3 and STUB1; the interactions promote PPARG poylubiquitination and STUB1-mediated degradation. Post-translationally, O-GlcNAcylation at Thr-84 reduces transcriptional activity in adipocytes. Phosphorylated in basal conditions and dephosphorylated when treated with the ligand. May be dephosphorylated by PPP5C. The phosphorylated form may be inactive and dephosphorylation at Ser-112 induces adipogenic activity. In terms of processing, ubiquitinated by E3 ubiquitin-protein ligase complex containing FBXO9; leading to proteasomal degradation. Ubiquitinated at Lys-252 by TRIM55 leading to proteasomal degradation. Ubiquitinated by E3 ubiquitin-protein ligase STUB1/CHIP; leading to proteasomal degradation. In terms of tissue distribution, highest expression in adipose tissue. Lower in skeletal muscle, spleen, heart and liver. Also detectable in placenta, lung and ovary.

The protein localises to the nucleus. It localises to the cytoplasm. With respect to regulation, PDPK1 activates its transcriptional activity independently of its kinase activity. In terms of biological role, nuclear receptor that binds peroxisome proliferators such as hypolipidemic drugs and fatty acids. Once activated by a ligand, the nuclear receptor binds to DNA specific PPAR response elements (PPRE) and modulates the transcription of its target genes, such as acyl-CoA oxidase. It therefore controls the peroxisomal beta-oxidation pathway of fatty acids. Key regulator of adipocyte differentiation and glucose homeostasis. ARF6 acts as a key regulator of the tissue-specific adipocyte P2 (aP2) enhancer. Acts as a critical regulator of gut homeostasis by suppressing NF-kappa-B-mediated pro-inflammatory responses. Plays a role in the regulation of cardiovascular circadian rhythms by regulating the transcription of BMAL1 in the blood vessels. Functionally, (Microbial infection) Upon treatment with M.tuberculosis or its lipoprotein LpqH, phosphorylation of MAPK p38 and IL-6 production are modulated, probably via this protein. In Homo sapiens (Human), this protein is Peroxisome proliferator-activated receptor gamma (PPARG).